A 412-amino-acid chain; its full sequence is Citrate synthase (412 aa).

Active-site residues include H305 and D364.

It belongs to the citrate synthase family.

The enzyme catalyses oxaloacetate + acetyl-CoA + H2O = citrate + CoA + H(+). It functions in the pathway carbohydrate metabolism; tricarboxylic acid cycle; isocitrate from oxaloacetate: step 1/2. The polypeptide is Citrate synthase (gltA) (Rickettsia bellii).